An 832-amino-acid polypeptide reads, in one-letter code: AP-1 complex subunit gamma-1 (832 aa).

In terms of domain architecture, GAE spans 733-832; it reads LNVYASLLSA…QFDHKFDETL (100 aa).

In terms of assembly, adapter protein complex 1 (AP-1) is a heterotetramer composed of two large adaptins (gamma-type subunit APL4 and beta-type subunit APL2), a medium adaptin (mu-type subunit APM1) and a small adaptin (sigma-type subunit APS1). AP-1 interacts with clathrin. Also a component of the AP-1R complex composed of at least APM2, APL4 and APS1.

Its subcellular location is the cytoplasm. The protein resides in the golgi apparatus membrane. It localises to the cytoplasmic vesicle. It is found in the clathrin-coated vesicle membrane. Its function is as follows. Adaptins are components of the adapter complexes which link clathrin to receptors in coated vesicles. Clathrin-associated protein complexes are believed to interact with the cytoplasmic tails of membrane proteins, leading to their selection and concentration. The AP-1 complex interacts directly with clathrin. Component of the AP-1-related (AP-1R) complex, an adapter protein complex that mediates sorting of cargo SNARE SNC1. In contrast to the APM1-containing AP-1 complex, AP-1R is incapable of sorting CHS3. The protein is AP-1 complex subunit gamma-1 (APL4) of Saccharomyces cerevisiae (strain ATCC 204508 / S288c) (Baker's yeast).